Consider the following 236-residue polypeptide: uncharacterized protein (236 aa).

Positions 3-116 constitute a Response regulatory domain; it reads TCLIVDDELF…RLSKTLKRVR (114 aa). Aspartate 54 bears the 4-aspartylphosphate mark. The HTH LytTR-type domain maps to 135–235; the sequence is LPCYSGSKLK…LKSLKQLFGF (101 aa).

This is an uncharacterized protein from Shewanella oneidensis (strain ATCC 700550 / JCM 31522 / CIP 106686 / LMG 19005 / NCIMB 14063 / MR-1).